The primary structure comprises 449 residues: tRNA-2-methylthio-N(6)-dimethylallyladenosine synthase (449 aa).

Residues 4-119 (RTFHIETFGC…APQALDRLVE (116 aa)) enclose the MTTase N-terminal domain. Residues Cys-13, Cys-48, Cys-82, Cys-158, Cys-162, and Cys-165 each coordinate [4Fe-4S] cluster. In terms of domain architecture, Radical SAM core spans 144–375 (GAVPASVFVN…QTLQNRLTER (232 aa)). A TRAM domain is found at 378 to 446 (QDMVGRKVEV…KHSLLAEQAG (69 aa)).

This sequence belongs to the methylthiotransferase family. MiaB subfamily. As to quaternary structure, monomer. [4Fe-4S] cluster is required as a cofactor.

Its subcellular location is the cytoplasm. It catalyses the reaction N(6)-dimethylallyladenosine(37) in tRNA + (sulfur carrier)-SH + AH2 + 2 S-adenosyl-L-methionine = 2-methylsulfanyl-N(6)-dimethylallyladenosine(37) in tRNA + (sulfur carrier)-H + 5'-deoxyadenosine + L-methionine + A + S-adenosyl-L-homocysteine + 2 H(+). Functionally, catalyzes the methylthiolation of N6-(dimethylallyl)adenosine (i(6)A), leading to the formation of 2-methylthio-N6-(dimethylallyl)adenosine (ms(2)i(6)A) at position 37 in tRNAs that read codons beginning with uridine. This is tRNA-2-methylthio-N(6)-dimethylallyladenosine synthase from Nitratidesulfovibrio vulgaris (strain ATCC 29579 / DSM 644 / CCUG 34227 / NCIMB 8303 / VKM B-1760 / Hildenborough) (Desulfovibrio vulgaris).